A 133-amino-acid polypeptide reads, in one-letter code: Ribosome-binding factor A (133 aa).

This sequence belongs to the RbfA family. Monomer. Binds 30S ribosomal subunits, but not 50S ribosomal subunits or 70S ribosomes.

It localises to the cytoplasm. Functionally, one of several proteins that assist in the late maturation steps of the functional core of the 30S ribosomal subunit. Associates with free 30S ribosomal subunits (but not with 30S subunits that are part of 70S ribosomes or polysomes). Required for efficient processing of 16S rRNA. May interact with the 5'-terminal helix region of 16S rRNA. The protein is Ribosome-binding factor A of Bordetella pertussis (strain Tohama I / ATCC BAA-589 / NCTC 13251).